Reading from the N-terminus, the 496-residue chain is Probable glycine dehydrogenase (decarboxylating) subunit 2 (496 aa).

At Lys-265 the chain carries N6-(pyridoxal phosphate)lysine.

This sequence belongs to the GcvP family. C-terminal subunit subfamily. In terms of assembly, the glycine cleavage system is composed of four proteins: P, T, L and H. In this organism, the P 'protein' is a heterodimer of two subunits. Requires pyridoxal 5'-phosphate as cofactor.

It carries out the reaction N(6)-[(R)-lipoyl]-L-lysyl-[glycine-cleavage complex H protein] + glycine + H(+) = N(6)-[(R)-S(8)-aminomethyldihydrolipoyl]-L-lysyl-[glycine-cleavage complex H protein] + CO2. In terms of biological role, the glycine cleavage system catalyzes the degradation of glycine. The P protein binds the alpha-amino group of glycine through its pyridoxal phosphate cofactor; CO(2) is released and the remaining methylamine moiety is then transferred to the lipoamide cofactor of the H protein. In Thioalkalivibrio sulfidiphilus (strain HL-EbGR7), this protein is Probable glycine dehydrogenase (decarboxylating) subunit 2.